A 921-amino-acid polypeptide reads, in one-letter code: Probable serine/threonine-protein kinase DDB_G0275165 (921 aa).

The 255-residue stretch at 23-277 folds into the Protein kinase domain; it reads FDPLSIIGSG…SNILGLLEYI (255 aa). ATP contacts are provided by residues 29–37 and Lys-50; that span reads IGSGGFGKV. Asp-147 acts as the Proton acceptor in catalysis. Disordered stretches follow at residues 289 to 453, 465 to 492, 530 to 571, 583 to 653, 671 to 698, 737 to 813, 833 to 858, and 877 to 921; these read DYEP…SFPR, RGEE…NEED, RPWN…SDSN, NPTP…PTTI, STAT…SNNN, IQPL…SRSL, SSQQ…TSQF, and FEKS…KPKK. Low complexity-rich tracts occupy residues 310–352, 400–412, and 429–445; these read NNNN…NNNN, SNIN…NNSN, and NING…NNNN. Low complexity-rich tracts occupy residues 539-550 and 583-638; these read NNNNKNNNNNEK and NPTP…SLSS. The segment covering 643-653 has biased composition (polar residues); that stretch reads PQSTYKVPTTI. 3 stretches are compositionally biased toward low complexity: residues 748–775, 842–857, and 892–910; these read TVAA…PTST, QPSS…PTSQ, and TSSS…PSSP.

This sequence belongs to the protein kinase superfamily. TKL Ser/Thr protein kinase family.

It catalyses the reaction L-seryl-[protein] + ATP = O-phospho-L-seryl-[protein] + ADP + H(+). It carries out the reaction L-threonyl-[protein] + ATP = O-phospho-L-threonyl-[protein] + ADP + H(+). The protein is Probable serine/threonine-protein kinase DDB_G0275165 of Dictyostelium discoideum (Social amoeba).